Reading from the N-terminus, the 224-residue chain is 2-C-methyl-D-erythritol 4-phosphate cytidylyltransferase (224 aa).

Belongs to the IspD/TarI cytidylyltransferase family. IspD subfamily.

The catalysed reaction is 2-C-methyl-D-erythritol 4-phosphate + CTP + H(+) = 4-CDP-2-C-methyl-D-erythritol + diphosphate. It participates in isoprenoid biosynthesis; isopentenyl diphosphate biosynthesis via DXP pathway; isopentenyl diphosphate from 1-deoxy-D-xylulose 5-phosphate: step 2/6. In terms of biological role, catalyzes the formation of 4-diphosphocytidyl-2-C-methyl-D-erythritol from CTP and 2-C-methyl-D-erythritol 4-phosphate (MEP). This is 2-C-methyl-D-erythritol 4-phosphate cytidylyltransferase from Clostridium botulinum (strain Eklund 17B / Type B).